We begin with the raw amino-acid sequence, 5628 residues long: Polyketide synthase ThaG (5628 aa).

In terms of domain architecture, Ketosynthase family 3 (KS3) 1 spans 13-448 (HDDIAVIGIA…GTNAHVVLRE (436 aa)). Catalysis depends on for beta-ketoacyl synthase 1 activity residues C184, H319, and H361. Disordered regions lie at residues 552–613 (GNLV…DGPT) and 1156–1183 (ASPG…RAEA). A compositionally biased stretch (basic and acidic residues) spans 559-589 (GPHDEQADHDGSGEHGEHGERARAGADDLSR). The span at 1156 to 1173 (ASPGAASSGAAAPNAASD) shows a compositional bias: low complexity. Residues 1174–1183 (ASRDTERAEA) show a composition bias toward basic and acidic residues. One can recognise a Carrier 1 domain in the interval 1209 to 1286 (AHGSARLPAL…RLAGHLATRL (78 aa)). At S1246 the chain carries O-(pantetheine 4'-phosphoryl)serine. The Ketosynthase family 3 (KS3) 2 domain maps to 1373–1781 (YEPIAIVGMS…GTNAHVIVEA (409 aa)). Catalysis depends on for beta-ketoacyl synthase 2 activity residues C1529, H1664, and H1704. The N-terminal hotdog fold 1 stretch occupies residues 1967–2099 (AREPGARERA…GVVDELNEPA (133 aa)). The 295-residue stretch at 1967 to 2261 (AREPGARERA…SARWRKLAGA (295 aa)) folds into the PKS/mFAS DH 1 domain. H1999 serves as the catalytic Proton acceptor; for dehydratase activity 1. Positions 2113–2261 (AGERVDGAAL…SARWRKLAGA (149 aa)) are C-terminal hotdog fold 1. The active-site Proton donor; for dehydratase activity 1 is D2175. A disordered region spans residues 2426–2446 (DADEDDRDGREPAGGPPLRDD). Residues 2702–2780 (PAARVDLHAL…AIARALDASA (79 aa)) enclose the Carrier 2 domain. The interval 2817–2836 (TPPDAGAPQRGAHAAAAEGS) is disordered. Over residues 2822–2835 (GAPQRGAHAAAAEG) the composition is skewed to low complexity. The region spanning 2862 to 2935 (ARVGARLSAL…ELTDYFVRRH (74 aa)) is the Carrier 3 domain. S2896 is modified (O-(pantetheine 4'-phosphoryl)serine). In terms of domain architecture, Ketosynthase family 3 (KS3) 3 spans 3005–3430 (ADAIAVIGLA…GANAHVIVRE (426 aa)). Active-site for beta-ketoacyl synthase 3 activity residues include C3175, H3310, and H3351. The disordered stretch occupies residues 3526–3546 (PGKKQLRGNGRARRGDAPPAG). The interval 3621–3743 (HPMLDANRSE…GRSPSRAARG (123 aa)) is N-terminal hotdog fold 2. In terms of domain architecture, PKS/mFAS DH 2 spans 3621–3895 (HPMLDANRSE…SRAAASWRTA (275 aa)). The Proton acceptor; for dehydratase activity 2 role is filled by H3650. Positions 3758 to 3895 (RAAPAFDADA…SRAAASWRTA (138 aa)) are C-terminal hotdog fold 2. The active-site Proton donor; for dehydratase activity 2 is the D3818. The segment at 3917–3942 (PAAESPSAATSTSAATSPAISTSAAT) is disordered. Residues 4840-4914 (TRTAALLRSL…ALAAYVGSQL (75 aa)) enclose the Carrier 4 domain. S4874 carries the post-translational modification O-(pantetheine 4'-phosphoryl)serine. The segment at 4960 to 4992 (APRARTGADAPDTSLASSASSISSARASSPASP) is disordered. The 427-residue stretch at 4998-5424 (SFDVAIVGAS…GVNAHVVLEE (427 aa)) folds into the Ketosynthase family 3 (KS3) 4 domain. Residues C5158, H5293, and H5339 each act as for beta-ketoacyl synthase 4 activity in the active site. The Carrier 5 domain maps to 5470–5544 (ARIEAVIRDA…ALRDHVAERI (75 aa)). At S5504 the chain carries O-(pantetheine 4'-phosphoryl)serine. Residues 5573–5603 (VSEATEASDASEASDASEASEASEASEASKA) form a disordered region.

Pantetheine 4'-phosphate serves as cofactor.

Its subcellular location is the cytoplasm. The protein operates within antibiotic biosynthesis. Involved in production of the polyketide antibiotic thailandamide. This Burkholderia thailandensis (strain ATCC 700388 / DSM 13276 / CCUG 48851 / CIP 106301 / E264) protein is Polyketide synthase ThaG.